The chain runs to 132 residues: Small ribosomal subunit protein uS8 (132 aa).

The protein belongs to the universal ribosomal protein uS8 family. In terms of assembly, part of the 30S ribosomal subunit. Contacts proteins S5 and S12.

One of the primary rRNA binding proteins, it binds directly to 16S rRNA central domain where it helps coordinate assembly of the platform of the 30S subunit. The polypeptide is Small ribosomal subunit protein uS8 (Streptomyces griseus subsp. griseus (strain JCM 4626 / CBS 651.72 / NBRC 13350 / KCC S-0626 / ISP 5235)).